Reading from the N-terminus, the 434-residue chain is SPARC-related modular calcium-binding protein 1 (434 aa).

The N-terminal stretch at 1–26 (MLPARCARLLTPHLLLVLVQLSPARG) is a signal peptide. The Kazal-like domain maps to 37–89 (SDRDPQCNLHCSRTQPKPICASDGRSYESMCEYQRAKCRDPTLGVVHRGRCKD). 6 disulfide bridges follow: Cys-43–Cys-74, Cys-47–Cys-67, Cys-56–Cys-87, Cys-95–Cys-118, Cys-129–Cys-136, and Cys-138–Cys-158. The 67-residue stretch at 92–158 (QSKCRLERAQ…SSVQNKTPVC (67 aa)) folds into the Thyroglobulin type-1 1 domain. Polar residues predominate over residues 149–172 (SSVQNKTPVCSGSVTDKPLSQGNS). The tract at residues 149-191 (SSVQNKTPVCSGSVTDKPLSQGNSGRKDDGSKPTPTMETQPVF) is disordered. Asn-214 carries an N-linked (GlcNAc...) asparagine glycan. The 69-residue stretch at 224–292 (VYSCDQERQS…TSTRYVMPSC (69 aa)) folds into the Thyroglobulin type-1 2 domain. Disulfide bonds link Cys-227/Cys-251, Cys-262/Cys-269, and Cys-271/Cys-292. EF-hand domains are found at residues 359–394 (LEER…VKKK) and 396–431 (KPKK…SKEG). Residues Asp-372, Asn-374, Ser-376, Asp-378, Glu-383, Asp-409, Asn-411, Asp-413, and Glu-420 each coordinate Ca(2+). N-linked (GlcNAc...) asparagine glycosylation is present at Asn-374.

Glycosylated. Widely expressed in many tissues with a strongest signal in ovary. No expression in spleen.

It localises to the secreted. The protein localises to the extracellular space. The protein resides in the extracellular matrix. It is found in the basement membrane. Functionally, plays essential roles in both eye and limb development. Probable regulator of osteoblast differentiation. In Homo sapiens (Human), this protein is SPARC-related modular calcium-binding protein 1 (SMOC1).